The following is a 609-amino-acid chain: Mitochondrial nucleoid-associated protein 1 (609 aa).

Topologically, residues 1–552 (MSDNPPRMEV…IRCNTTIRKS (552 aa)) are mitochondrial matrix. 3 disordered regions span residues 142-168 (ASEK…NPSE), 183-202 (SNQD…TTSG), and 410-441 (QLSL…HTPQ). Positions 146–161 (TSPKRELAKDLPKSGE) are enriched in basic and acidic residues. Over residues 418–441 (DSQFQASHTGCQSPLCSAQRHTPQ) the composition is skewed to polar residues. The helical transmembrane segment at 553 to 573 (GFGGITMLFTGYFVLCCSWSF) threads the bilayer. The Mitochondrial intermembrane segment spans residues 574–609 (RRLKKLCRPLPWKSTVPPCIGVAKTTGDCRSKTCLD).

Its subcellular location is the mitochondrion inner membrane. It localises to the mitochondrion matrix. The protein resides in the mitochondrion nucleoid. In terms of biological role, critical regulator of mitochondrial DNA (mtDNA) abundance. Binds dsDNA throughout the mitochondrial genome without sequence specificity and controls mtDNA copy number by promoting its replication. Also plays important roles in mitochondrial metabolism and cell proliferation. This is Mitochondrial nucleoid-associated protein 1 from Homo sapiens (Human).